We begin with the raw amino-acid sequence, 201 residues long: Imidazole glycerol phosphate synthase subunit HisH (201 aa).

In terms of domain architecture, Glutamine amidotransferase type-1 spans methionine 1–aspartate 201. The Nucleophile role is filled by cysteine 79. Active-site residues include histidine 181 and glutamate 183.

Heterodimer of HisH and HisF.

It localises to the cytoplasm. It carries out the reaction 5-[(5-phospho-1-deoxy-D-ribulos-1-ylimino)methylamino]-1-(5-phospho-beta-D-ribosyl)imidazole-4-carboxamide + L-glutamine = D-erythro-1-(imidazol-4-yl)glycerol 3-phosphate + 5-amino-1-(5-phospho-beta-D-ribosyl)imidazole-4-carboxamide + L-glutamate + H(+). The enzyme catalyses L-glutamine + H2O = L-glutamate + NH4(+). The protein operates within amino-acid biosynthesis; L-histidine biosynthesis; L-histidine from 5-phospho-alpha-D-ribose 1-diphosphate: step 5/9. IGPS catalyzes the conversion of PRFAR and glutamine to IGP, AICAR and glutamate. The HisH subunit catalyzes the hydrolysis of glutamine to glutamate and ammonia as part of the synthesis of IGP and AICAR. The resulting ammonia molecule is channeled to the active site of HisF. The sequence is that of Imidazole glycerol phosphate synthase subunit HisH from Streptococcus mutans serotype c (strain ATCC 700610 / UA159).